The sequence spans 832 residues: Leucine--tRNA ligase (832 aa).

The 'HIGH' region motif lies at 58 to 68 (PYPSGDLHMGH). The 'KMSKS' region signature appears at 598-602 (AMSKS). Residue Lys-601 coordinates ATP.

This sequence belongs to the class-I aminoacyl-tRNA synthetase family.

Its subcellular location is the cytoplasm. The enzyme catalyses tRNA(Leu) + L-leucine + ATP = L-leucyl-tRNA(Leu) + AMP + diphosphate. The sequence is that of Leucine--tRNA ligase from Acidothermus cellulolyticus (strain ATCC 43068 / DSM 8971 / 11B).